A 1157-amino-acid polypeptide reads, in one-letter code: DNA-directed RNA polymerase subunit beta (1157 aa).

It belongs to the RNA polymerase beta chain family. As to quaternary structure, the RNAP catalytic core consists of 2 alpha, 1 beta, 1 beta' and 1 omega subunit. When a sigma factor is associated with the core the holoenzyme is formed, which can initiate transcription.

It carries out the reaction RNA(n) + a ribonucleoside 5'-triphosphate = RNA(n+1) + diphosphate. Functionally, DNA-dependent RNA polymerase catalyzes the transcription of DNA into RNA using the four ribonucleoside triphosphates as substrates. The protein is DNA-directed RNA polymerase subunit beta of Tropheryma whipplei (Whipple's bacillus).